A 160-amino-acid polypeptide reads, in one-letter code: Major pollen allergen Car b 1 isoforms 1A and 1B (160 aa).

Belongs to the BetVI family.

The protein is Major pollen allergen Car b 1 isoforms 1A and 1B of Carpinus betulus (European hornbeam).